We begin with the raw amino-acid sequence, 394 residues long: Mitogen-activated protein kinase homolog D5 (394 aa).

Residues 62–347 (RPPIMPIGKG…VENALAHPYL (286 aa)) form the Protein kinase domain. Residues 68–76 (IGKGAYGIV) and Lys-91 each bind ATP. Asp-188 (proton acceptor) is an active-site residue. The residue at position 220 (Thr-220) is a Phosphothreonine. Positions 220–222 (TEY) match the TXY motif. Phosphotyrosine is present on Tyr-222.

Belongs to the protein kinase superfamily. CMGC Ser/Thr protein kinase family. MAP kinase subfamily. It depends on Mg(2+) as a cofactor. Dually phosphorylated on Thr-220 and Tyr-222, which activates the enzyme. In terms of tissue distribution, leaves, roots, root apices, and dormant and growing axillary buds.

It carries out the reaction L-seryl-[protein] + ATP = O-phospho-L-seryl-[protein] + ADP + H(+). The catalysed reaction is L-threonyl-[protein] + ATP = O-phospho-L-threonyl-[protein] + ADP + H(+). Activated by tyrosine and threonine phosphorylation. The polypeptide is Mitogen-activated protein kinase homolog D5 (Pisum sativum (Garden pea)).